A 148-amino-acid chain; its full sequence is Antigen GM6 (148 aa).

Residues 1–22 form a disordered region; sequence KLKASDSRSFLDPMPEGVPLSE. 2 tandem repeats follow at residues 1-68 and 69-136. One copy of the 3; truncated repeat lies at 137–148; it reads KLKASDSRSFQS.

Its subcellular location is the cytoplasm. The protein resides in the cytoskeleton. This Trypanosoma brucei gambiense protein is Antigen GM6 (GM6).